The chain runs to 460 residues: Probable Xaa-Pro aminopeptidase VDBG_02538 (460 aa).

Asp-256, Asp-267, Glu-390, and Glu-430 together coordinate Mn(2+).

Belongs to the peptidase M24B family. Mn(2+) is required as a cofactor.

The catalysed reaction is Release of any N-terminal amino acid, including proline, that is linked to proline, even from a dipeptide or tripeptide.. Functionally, catalyzes the removal of a penultimate prolyl residue from the N-termini of peptides. The protein is Probable Xaa-Pro aminopeptidase VDBG_02538 of Verticillium alfalfae (strain VaMs.102 / ATCC MYA-4576 / FGSC 10136) (Verticillium wilt of alfalfa).